A 479-amino-acid polypeptide reads, in one-letter code: Probable cytosol aminopeptidase (479 aa).

Lys247 and Asp252 together coordinate Mn(2+). The active site involves Lys259. Positions 270, 329, and 331 each coordinate Mn(2+). The active site involves Arg333.

This sequence belongs to the peptidase M17 family. Mn(2+) serves as cofactor.

The protein resides in the cytoplasm. The enzyme catalyses Release of an N-terminal amino acid, Xaa-|-Yaa-, in which Xaa is preferably Leu, but may be other amino acids including Pro although not Arg or Lys, and Yaa may be Pro. Amino acid amides and methyl esters are also readily hydrolyzed, but rates on arylamides are exceedingly low.. It carries out the reaction Release of an N-terminal amino acid, preferentially leucine, but not glutamic or aspartic acids.. In terms of biological role, presumably involved in the processing and regular turnover of intracellular proteins. Catalyzes the removal of unsubstituted N-terminal amino acids from various peptides. This chain is Probable cytosol aminopeptidase, found in Vesicomyosocius okutanii subsp. Calyptogena okutanii (strain HA).